Consider the following 113-residue polypeptide: MTMNITSKQMEITPAIRQHVADRLAKLEKWQTHLINPHIILSKEPQGFVADATINTPNGVLVASGKHEDMYTAINELINKLERQLNKLQHKGEARRAATSVKDANFVEEVEEE.

K66 bears the N6-acetyllysine mark. A disordered region spans residues 91–113 (KGEARRAATSVKDANFVEEVEEE).

This sequence belongs to the HPF/YfiA ribosome-associated protein family. YfiA subfamily. In terms of assembly, associates mainly with 70S ribosomes.

During stationary phase, prevents 70S dimer formation, probably in order to regulate translation efficiency during transition between the exponential and the stationary phases. In addition, during environmental stress such as cold shock or excessive cell density at stationary phase, stabilizes the 70S ribosome against dissociation, inhibits translation initiation and increase translation accuracy. When normal growth conditions are restored, is quickly released from the ribosome. This Escherichia coli O157:H7 protein is Ribosome-associated factor Y.